Reading from the N-terminus, the 446-residue chain is Tubulin alpha chain-like 3 (446 aa).

An MREC motif motif is present at residues methionine 1–cysteine 4. Positions 11, 78, 147, 151, 152, 186, 213, and 235 each coordinate GTP. Position 78 (glutamate 78) interacts with Mg(2+). The active site involves glutamate 261.

It belongs to the tubulin family. Dimer of alpha and beta chains. A typical microtubule is a hollow water-filled tube with an outer diameter of 25 nm and an inner diameter of 15 nM. Alpha-beta heterodimers associate head-to-tail to form protofilaments running lengthwise along the microtubule wall with the beta-tubulin subunit facing the microtubule plus end conferring a structural polarity. Microtubules usually have 13 protofilaments but different protofilament numbers can be found in some organisms and specialized cells. Requires Mg(2+) as cofactor. Post-translationally, some glutamate residues at the C-terminus are polyglutamylated, resulting in polyglutamate chains on the gamma-carboxyl group. Polyglutamylation plays a key role in microtubule severing by spastin (SPAST). SPAST preferentially recognizes and acts on microtubules decorated with short polyglutamate tails: severing activity by SPAST increases as the number of glutamates per tubulin rises from one to eight, but decreases beyond this glutamylation threshold. Glutamylation is also involved in cilia motility. In terms of processing, some glutamate residues at the C-terminus are monoglycylated but not polyglycylated due to the absence of functional TTLL10 in human. Monoglycylation is mainly limited to tubulin incorporated into cilia and flagella axonemes, which is required for their stability and maintenance. Flagella glycylation controls sperm motility. Both polyglutamylation and monoglycylation can coexist on the same protein on adjacent residues, and lowering glycylation levels increases polyglutamylation, and reciprocally.

The protein resides in the cytoplasm. Its subcellular location is the cytoskeleton. It carries out the reaction GTP + H2O = GDP + phosphate + H(+). Its function is as follows. Tubulin is the major constituent of microtubules, a cylinder consisting of laterally associated linear protofilaments composed of alpha- and beta-tubulin heterodimers. Microtubules grow by the addition of GTP-tubulin dimers to the microtubule end, where a stabilizing cap forms. Below the cap, tubulin dimers are in GDP-bound state, owing to GTPase activity of alpha-tubulin. In Homo sapiens (Human), this protein is Tubulin alpha chain-like 3 (TUBAL3).